Consider the following 317-residue polypeptide: Mitochondrial thiamine pyrophosphate carrier 1 (317 aa).

A run of 6 helical transmembrane segments spans residues 21-41 (AVSG…ARSV), 86-106 (VPAS…YAWL), 122-142 (LAVG…LDLL), 176-196 (GGAW…GIYE), 207-227 (LPWL…AAVF), and 281-300 (GLTM…LWVY). 3 Solcar repeats span residues 22 to 109 (VSGL…LNTA), 116 to 201 (PPQA…CTIA), and 206 to 306 (GLPW…CLRL).

Belongs to the mitochondrial carrier (TC 2.A.29) family.

It localises to the mitochondrion inner membrane. Mitochondrial transporter that mediates uptake of thiamine pyrophosphate (ThPP) into mitochondria. The protein is Mitochondrial thiamine pyrophosphate carrier 1 (TPC1) of Eremothecium gossypii (strain ATCC 10895 / CBS 109.51 / FGSC 9923 / NRRL Y-1056) (Yeast).